The sequence spans 62 residues: Photosystem II reaction center protein Z (62 aa).

2 helical membrane passes run 8-28 and 41-61; these read ALFALIATSFLLVVGVPVAFA and FSGASLWIGLVFLVGIPNSFI.

The protein belongs to the PsbZ family. In terms of assembly, PSII is composed of 1 copy each of membrane proteins PsbA, PsbB, PsbC, PsbD, PsbE, PsbF, PsbH, PsbI, PsbJ, PsbK, PsbL, PsbM, PsbT, PsbY, PsbZ, Psb30/Ycf12, at least 3 peripheral proteins of the oxygen-evolving complex and a large number of cofactors. It forms dimeric complexes.

The protein localises to the plastid. It localises to the chloroplast thylakoid membrane. In terms of biological role, may control the interaction of photosystem II (PSII) cores with the light-harvesting antenna, regulates electron flow through the 2 photosystem reaction centers. PSII is a light-driven water plastoquinone oxidoreductase, using light energy to abstract electrons from H(2)O, generating a proton gradient subsequently used for ATP formation. This chain is Photosystem II reaction center protein Z, found in Adiantum capillus-veneris (Maidenhair fern).